A 429-amino-acid polypeptide reads, in one-letter code: Zinc finger protein 385C (429 aa).

The Matrin-type 1 zinc-finger motif lies at isoleucine 77–alanine 107. Disordered stretches follow at residues glutamate 109–glutamate 224, glycine 258–proline 295, and glutamine 311–glutamine 340. Positions threonine 125–proline 146 are enriched in low complexity. Over residues alanine 147 to aspartate 162 the composition is skewed to pro residues. Over residues cysteine 181–proline 193 the composition is skewed to low complexity. The segment at lysine 225–histidine 259 adopts a Matrin-type 2 zinc-finger fold. Positions alanine 262–isoleucine 284 are enriched in basic residues. The segment at phenylalanine 297 to glycine 327 adopts a Matrin-type 3 zinc-finger fold.

Its subcellular location is the nucleus. The sequence is that of Zinc finger protein 385C from Mus musculus (Mouse).